We begin with the raw amino-acid sequence, 135 residues long: Small ribosomal subunit protein uS9 (135 aa).

Residues 108–118 are compositionally biased toward basic and acidic residues; it reads VGDSRRTEPHK. Residues 108–135 form a disordered region; that stretch reads VGDSRRTEPHKPNRSTKGPRAKRQKSYR. Over residues 119–135 the composition is skewed to basic residues; the sequence is PNRSTKGPRAKRQKSYR.

Belongs to the universal ribosomal protein uS9 family. Part of the 30S ribosomal subunit.

The polypeptide is Small ribosomal subunit protein uS9 (Thermococcus kodakarensis (strain ATCC BAA-918 / JCM 12380 / KOD1) (Pyrococcus kodakaraensis (strain KOD1))).